The chain runs to 278 residues: 2-dehydro-3-deoxyphosphooctonate aldolase (278 aa).

This sequence belongs to the KdsA family.

It localises to the cytoplasm. It carries out the reaction D-arabinose 5-phosphate + phosphoenolpyruvate + H2O = 3-deoxy-alpha-D-manno-2-octulosonate-8-phosphate + phosphate. It participates in carbohydrate biosynthesis; 3-deoxy-D-manno-octulosonate biosynthesis; 3-deoxy-D-manno-octulosonate from D-ribulose 5-phosphate: step 2/3. Its pathway is bacterial outer membrane biogenesis; lipopolysaccharide biosynthesis. The polypeptide is 2-dehydro-3-deoxyphosphooctonate aldolase (Fusobacterium nucleatum subsp. nucleatum (strain ATCC 25586 / DSM 15643 / BCRC 10681 / CIP 101130 / JCM 8532 / KCTC 2640 / LMG 13131 / VPI 4355)).